A 309-amino-acid chain; its full sequence is Olfactory receptor 1A1 (309 aa).

The Extracellular portion of the chain corresponds to 1–25 (MRENNQSSTLEFILLGVTGQQEQED). The N-linked (GlcNAc...) asparagine glycan is linked to N5. The chain crosses the membrane as a helical span at residues 26 to 49 (FFYILFLFIYPITLIGNLLIVLAI). The Cytoplasmic portion of the chain corresponds to 50–57 (CSDVHLHN). Residues 58–79 (PMYFLLANLSLVDIFFSSVTIP) traverse the membrane as a helical segment. The Extracellular portion of the chain corresponds to 80–100 (KMLANHLLGSKSISFGGCLTQ). A disulfide bridge links C97 with C189. A helical membrane pass occupies residues 101-120 (MYFMIALGNTDSYILAAMAY). Residues 121–139 (DRAVAISRPLHYTTIMSPR) are Cytoplasmic-facing. The helical transmembrane segment at 140-158 (SCIWLIAGSWVIGNANALP) threads the bilayer. Residues 159–195 (HTLLTASLSFCGNQEVANFYCDITPLLKLSCSDIHFH) are Extracellular-facing. Residues 196 to 218 (VKMMYLGVGIFSVPLLCIIVSYI) traverse the membrane as a helical segment. The Cytoplasmic portion of the chain corresponds to 219–235 (RVFSTVFQVPSTKGVLK). Residues 236–258 (AFSTCGSHLTVVSLYYGTVMGMY) traverse the membrane as a helical segment. At 259–270 (FRPLTNYSLKDA) the chain is on the extracellular side. The N-linked (GlcNAc...) asparagine glycan is linked to N264. The helical transmembrane segment at 271–290 (VITVMYTAVTPMLNPFIYSL) threads the bilayer. Residues 291 to 309 (RNRDVKAALRKLFNKRISS) lie on the Cytoplasmic side of the membrane.

The protein belongs to the G-protein coupled receptor 1 family.

It is found in the cell membrane. In terms of biological role, odorant receptor. The protein is Olfactory receptor 1A1 (OR1A1) of Pan troglodytes (Chimpanzee).